A 142-amino-acid chain; its full sequence is Interleukin-3 (142 aa).

A signal peptide spans 1-18; that stretch reads MSHLPILLLLLLVSPGLQ. N-linked (GlcNAc...) asparagine glycosylation is present at Asn-33. Cys-34 and Cys-102 form a disulfide bridge.

It belongs to the IL-3 family. In terms of assembly, monomer. As to expression, activated T-cells, mast cells, natural killer cells.

The protein resides in the secreted. Granulocyte/macrophage colony-stimulating factors are cytokines that act in hematopoiesis by controlling the production, differentiation, and function of 2 related white cell populations of the blood, the granulocytes and the monocytes-macrophages. Its function is as follows. This CSF induces granulocytes, macrophages, mast cells, stem cells, erythroid cells, eosinophils and megakaryocytes. The chain is Interleukin-3 (IL3) from Callithrix jacchus (White-tufted-ear marmoset).